The primary structure comprises 247 residues: 2,3-bisphosphoglycerate-dependent phosphoglycerate mutase (247 aa).

Substrate is bound by residues 8–15 (RHGQSLWN), 21–22 (TG), R60, 87–90 (ERHY), K98, 114–115 (RR), and 183–184 (GN). The active-site Tele-phosphohistidine intermediate is H9. Catalysis depends on E87, which acts as the Proton donor/acceptor.

Belongs to the phosphoglycerate mutase family. BPG-dependent PGAM subfamily.

The enzyme catalyses (2R)-2-phosphoglycerate = (2R)-3-phosphoglycerate. Its pathway is carbohydrate degradation; glycolysis; pyruvate from D-glyceraldehyde 3-phosphate: step 3/5. Functionally, catalyzes the interconversion of 2-phosphoglycerate and 3-phosphoglycerate. In Hydrogenobaculum sp. (strain Y04AAS1), this protein is 2,3-bisphosphoglycerate-dependent phosphoglycerate mutase.